The chain runs to 389 residues: Aspartyl protease UND (389 aa).

An N-terminal signal peptide occupies residues 1–19; it reads MKTTMNFVFLFFLPLLINA. Residues 58–383 form the Peptidase A1 domain; that stretch reads FMAEIHFGSP…DLSAKTAYIN (326 aa). Asp-76 is an active-site residue. A disulfide bond links Cys-86 and Cys-92. Asn-238 carries N-linked (GlcNAc...) asparagine glycosylation. Asp-268 is an active-site residue. A disulfide bond links Cys-304 and Cys-346.

It belongs to the peptidase A1 family.

Probable aspartic protease activated by the transcription factor MYB80. May participate in the regulation of the timing of tapetal programmed cell death (PCD) which is critical for pollen development. This Arabidopsis thaliana (Mouse-ear cress) protein is Aspartyl protease UND.